A 258-amino-acid polypeptide reads, in one-letter code: Granzyme M (258 aa).

Residues isoleucine 21 to glycine 250 enclose the Peptidase S1 domain. Cysteine 46 and cysteine 62 are joined by a disulfide. Residues histidine 61 and aspartate 107 each act as charge relay system in the active site. The segment at asparagine 122 to arginine 141 is disordered. 3 cysteine pairs are disulfide-bonded: cysteine 142-cysteine 210, cysteine 173-cysteine 189, and cysteine 200-cysteine 226. N-linked (GlcNAc...) asparagine glycosylation occurs at asparagine 174. Residue serine 204 is the Charge relay system of the active site. The N-linked (GlcNAc...) asparagine glycan is linked to asparagine 225.

This sequence belongs to the peptidase S1 family. Granzyme subfamily.

The protein resides in the secreted. It localises to the cytoplasmic granule. In terms of biological role, cleaves peptide substrates after methionine, leucine, and norleucine. Physiological substrates include EZR, alpha-tubulins and the apoptosis inhibitor BIRC5/Survivin. Promotes caspase activation and subsequent apoptosis of target cells. This chain is Granzyme M (Gzmm), found in Rattus norvegicus (Rat).